A 1135-amino-acid polypeptide reads, in one-letter code: Exportin-5 (1135 aa).

The 86-residue stretch at 32–117 folds into the Importin N-terminal domain; sequence SQVFLEEIKT…KEKLVTILVD (86 aa). The interval 630-631 is pre-siRNA binding; that stretch reads TE.

Belongs to the exportin family. As to quaternary structure, found in a nuclear export complex with RanGTP, exportin and pre-miRNA.

The protein localises to the nucleus. The protein resides in the cytoplasm. Functionally, mediates the nuclear export of proteins bearing a double-stranded RNA binding domain (dsRBD) and double-stranded RNAs (cargos). Its function is as follows. Mediates the nuclear export of micro-RNA precursors, which form short hairpins. The polypeptide is Exportin-5 (xpo5) (Dictyostelium discoideum (Social amoeba)).